The following is a 173-amino-acid chain: NAD(P)H-quinone oxidoreductase subunit J (173 aa).

The protein belongs to the complex I 30 kDa subunit family. NDH-1 can be composed of about 15 different subunits; different subcomplexes with different compositions have been identified which probably have different functions.

The protein localises to the cellular thylakoid membrane. It catalyses the reaction a plastoquinone + NADH + (n+1) H(+)(in) = a plastoquinol + NAD(+) + n H(+)(out). It carries out the reaction a plastoquinone + NADPH + (n+1) H(+)(in) = a plastoquinol + NADP(+) + n H(+)(out). Functionally, NDH-1 shuttles electrons from an unknown electron donor, via FMN and iron-sulfur (Fe-S) centers, to quinones in the respiratory and/or the photosynthetic chain. The immediate electron acceptor for the enzyme in this species is believed to be plastoquinone. Couples the redox reaction to proton translocation, and thus conserves the redox energy in a proton gradient. Cyanobacterial NDH-1 also plays a role in inorganic carbon-concentration. In Prochlorococcus marinus (strain NATL2A), this protein is NAD(P)H-quinone oxidoreductase subunit J.